The sequence spans 665 residues: Coiled-coil domain-containing protein 138 (665 aa).

Position 48 is a phosphothreonine (threonine 48). A Phosphoserine modification is found at serine 49. Residues 198–323 (QQKFAEELQK…YEFMTIQRLK (126 aa)) are a coiled coil. Serine 469 carries the post-translational modification Phosphoserine.

In Macaca fascicularis (Crab-eating macaque), this protein is Coiled-coil domain-containing protein 138 (CCDC138).